The primary structure comprises 243 residues: 3,4-dihydroxyphthalate decarboxylase (243 aa).

Residue E86 is the Proton donor/acceptor of the active site. Residues E86, H105, H107, and H173 each contribute to the a divalent metal cation site.

This sequence belongs to the aldolase class II family. A divalent metal cation serves as cofactor.

It catalyses the reaction 3,4-dihydroxyphthalate + H(+) = 3,4-dihydroxybenzoate + CO2. It participates in xenobiotic degradation; phthalate degradation. In terms of biological role, catalyzes the decarboxylation of 3,4-dihydroxyphthalate to protocatechuate (3,4-dihydroxybenzoate) during phthalate metabolism. The sequence is that of 3,4-dihydroxyphthalate decarboxylase from Rhodococcus jostii (strain RHA1).